The primary structure comprises 239 residues: Putative antitoxin VapB45 (239 aa).

In terms of biological role, possibly the antitoxin component of a type II toxin-antitoxin (TA) system. Its cognate toxin is VapC45. The protein is Putative antitoxin VapB45 of Mycobacterium tuberculosis (strain ATCC 25618 / H37Rv).